The primary structure comprises 434 residues: Cysteine--tRNA ligase (434 aa).

Cysteine 28 serves as a coordination point for Zn(2+). The 'HIGH' region motif lies at 30–40; the sequence is PTVYDDIHIGN. Cysteine 207, histidine 232, and glutamate 236 together coordinate Zn(2+). Residues 264–268 carry the 'KMSKS' region motif; the sequence is KMSKS. Lysine 267 serves as a coordination point for ATP.

It belongs to the class-I aminoacyl-tRNA synthetase family. Monomer. The cofactor is Zn(2+).

The protein resides in the cytoplasm. The enzyme catalyses tRNA(Cys) + L-cysteine + ATP = L-cysteinyl-tRNA(Cys) + AMP + diphosphate. This is Cysteine--tRNA ligase from Acholeplasma laidlawii (strain PG-8A).